A 346-amino-acid polypeptide reads, in one-letter code: Methylthioribose-1-phosphate isomerase (346 aa).

Substrate-binding positions include 46–48 (RGA), Arg89, and Gln196. Catalysis depends on Asp237, which acts as the Proton donor. 247–248 (NK) serves as a coordination point for substrate.

The protein belongs to the eIF-2B alpha/beta/delta subunits family. MtnA subfamily.

It catalyses the reaction 5-(methylsulfanyl)-alpha-D-ribose 1-phosphate = 5-(methylsulfanyl)-D-ribulose 1-phosphate. It functions in the pathway amino-acid biosynthesis; L-methionine biosynthesis via salvage pathway; L-methionine from S-methyl-5-thio-alpha-D-ribose 1-phosphate: step 1/6. Functionally, catalyzes the interconversion of methylthioribose-1-phosphate (MTR-1-P) into methylthioribulose-1-phosphate (MTRu-1-P). This is Methylthioribose-1-phosphate isomerase from Geobacter sp. (strain M21).